A 548-amino-acid polypeptide reads, in one-letter code: Glycosyl hydrolase family 109 protein 3 (548 aa).

The first 21 residues, 1 to 21 (MKLKKLLLSVLMLLSISGLQA), serve as a signal peptide directing secretion. NAD(+)-binding positions include 71-72 (MR), Asp93, 141-144 (WNHH), 161-162 (EV), and Asn190. Residue Tyr219 coordinates substrate. 240–244 (DNLHW) serves as a coordination point for NAD(+). Substrate contacts are provided by residues Arg245, 257 to 260 (YATH), and Tyr335. Position 257 (Tyr257) interacts with NAD(+).

It belongs to the Gfo/Idh/MocA family. Glycosyl hydrolase 109 subfamily. Requires NAD(+) as cofactor.

Its function is as follows. Glycosidase. This Phocaeicola vulgatus (strain ATCC 8482 / DSM 1447 / JCM 5826 / CCUG 4940 / NBRC 14291 / NCTC 11154) (Bacteroides vulgatus) protein is Glycosyl hydrolase family 109 protein 3.